Here is a 158-residue protein sequence, read N- to C-terminus: Scytalone dehydratase-like protein CPUR_05428 (158 aa).

The substrate site is built by Tyr-24 and Tyr-44. Active-site residues include His-79 and His-104.

The protein belongs to the scytalone dehydratase family.

It functions in the pathway pigment biosynthesis. Functionally, scytalone dehydratase-like protein; part of the ergochrome gene cluster responsible for the typical purple-black color of the ergot sclerotia. The ergochrome gene cluster produces several ergot pigments including the yellow ergochrome secalonic acid and its derivatives, as well as the red anthraquinones endocrocin and clavorubin. The pathway begins with the synthesis of atrochrysone thioester by the polyketide synthase (PKS) CPUR_05437. The atrochrysone carboxyl ACP thioesterase CPUR_05436 then breaks the thioester bond and releases the atrochrysone carboxylic acid from CPUR_05437. The atrochrysone carboxylic acid is then converted to atrochrysone which is further transformed into emodin anthrone. The next step is performed by the anthrone oxygenase CPUR_05434 that catalyzes the oxidation of emodinanthrone to emodin. Emodin is further modified to yield monodictyphenone via several steps involving CPUR_05427, CPUR_05428, CPUR_05429 and CPUR_05430. The short chain dehydrogenase/reductase CPUR_05418 then catalyzes the C-5 ketoreduction to give the xanthone skeleton of the monomeric units. Ergochromes formation requires further dimerization steps of different xanthone units, probably catalyzed by the cytochrome P450 monooxygenase CPUR_05419. CPUR_05425, CPUR_05426 and CPUR_05431 are unique to Claviceps, thus it is likely that they are involved in further modification of xanthone units or in their dimerization. The yellow ergochromes and the red anthraquinone pigments endocrocin and clavorubin are products from the same PKS derived precursors and the latter are likely shunt products in the pathway of xanthone biosynthesis. It is proposed that atrochrysone carboxylic acid released from the PKS CPUR_05437 can also be converted to endocrocin anthrone which is further oxidized into endocrocin by CPUR_05435. Endocrocin could be then modified to clavorubin, possibly by CPUR_05423 and CPUR_05431. Clavorubin is the principal anthraquinone metabolite produced by the cluster with a much higher yield compared to endocrocin. The protein is Scytalone dehydratase-like protein CPUR_05428 of Claviceps purpurea (strain 20.1) (Ergot fungus).